Reading from the N-terminus, the 5911-residue chain is Nonribosomal peptide synthetase 30 (5911 aa).

Residues 1 to 22 (MVPEKPTAQSKSGIGEPFRAGD) form a disordered region. The tract at residues 352 to 754 (ALIQPSSTAV…GRKDAQVKIR (403 aa)) is adenylation 1. Residues 891-968 (PRPFSVEYSL…EAAAIVARGT (78 aa)) form the Carrier 1 domain. Ser-928 carries the post-translational modification O-(pantetheine 4'-phosphoryl)serine. Positions 1007-1422 (EDAFPCTPLQ…ERLIFVIDQL (416 aa)) are condensation 1. The interval 1467–1865 (ERALSQPDRP…SLMFVGRKAD (399 aa)) is adenylation 2. A Carrier 2 domain is found at 2001-2077 (QPTSELEAEM…NICSHSYYCS (77 aa)). Residue Ser-2038 is modified to O-(pantetheine 4'-phosphoryl)serine. Positions 2121–2538 (QDAYPCTPLQ…GPDINMSDIG (418 aa)) are condensation 2. An adenylation 3 region spans residues 2568–2977 (EEQARLRPEA…GRKDSQVKIR (410 aa)). Residues 3110–3186 (QPSTNAQREL…LIADNSKSIK (77 aa)) form the Carrier 3 domain. Ser-3147 is modified (O-(pantetheine 4'-phosphoryl)serine). Residues 3227-3652 (VQDAYPCTPL…LELVIQAFMA (426 aa)) are condensation 3. The adenylation 4 stretch occupies residues 3701–4108 (EERVREQPNA…GRKDSQVKIR (408 aa)). A Carrier 4 domain is found at 4248–4325 (PPTTPLECQM…DIIATMTKNK (78 aa)). The residue at position 4285 (Ser-4285) is an O-(pantetheine 4'-phosphoryl)serine. Positions 4326 to 4347 (ATGASRRLPRDDDEPIPHTKYA) are disordered. Residues 4353–4793 (SYAQGRLWFL…SLPLLTEDGR (441 aa)) are condensation 4. The adenylation 5 stretch occupies residues 4819-5231 (FKEQVSRHPN…GRMDVQVKIR (413 aa)). The region spanning 5360–5436 (KPTTDMEVAL…ALARRQEEIV (77 aa)) is the Carrier 5 domain. Residue Ser-5397 is modified to O-(pantetheine 4'-phosphoryl)serine. The interval 5474–5828 (VEDMLPLTSM…GIKMKLHFFT (355 aa)) is condensation 5.

The protein belongs to the NRP synthetase family.

Its pathway is secondary metabolite biosynthesis. In terms of biological role, nonribosomal peptide synthetase; part of the gene cluster that mediates the biosynthesis of sansalvamide, a cyclic pentadepsipeptide that shows promising results as potential anti-cancer drug. The nonribosmal peptide synthetase NRPS30 produces sansalvamide by incorporating successively one phenylalanine, one leucine, one alpha-hydroxyisocaproic acid (HICA), one valine and one leucine before sansalvamide is released from by cyclization by the terminal C domain of NRPS30. The HICA residue is probably provided by reduction of alpha-ketoisocaproate by the cluster-specific aldo-keto reductase (NECHADRAFT_45914). This Fusarium vanettenii (strain ATCC MYA-4622 / CBS 123669 / FGSC 9596 / NRRL 45880 / 77-13-4) (Fusarium solani subsp. pisi) protein is Nonribosomal peptide synthetase 30.